Here is a 726-residue protein sequence, read N- to C-terminus: Catalase-peroxidase (726 aa).

Residues 1-33 (MSTTDDTHNTLSAGKCPFHQGGHDRSAGAGTAS) form a disordered region. A cross-link (tryptophyl-tyrosyl-methioninium (Trp-Tyr) (with M-252)) is located at residues 105 to 226 (WHGAGTYRSI…LGATEMGLIY (122 aa)). His-106 functions as the Proton acceptor in the catalytic mechanism. A cross-link (tryptophyl-tyrosyl-methioninium (Tyr-Met) (with W-105)) is located at residues 226–252 (YVNPEGPDHSGEPLSAAAAIRATFGNM). His-267 is a heme b binding site.

This sequence belongs to the peroxidase family. Peroxidase/catalase subfamily. In terms of assembly, homodimer or homotetramer. Heme b serves as cofactor. Formation of the three residue Trp-Tyr-Met cross-link is important for the catalase, but not the peroxidase activity of the enzyme.

The catalysed reaction is H2O2 + AH2 = A + 2 H2O. The enzyme catalyses 2 H2O2 = O2 + 2 H2O. In terms of biological role, bifunctional enzyme with both catalase and broad-spectrum peroxidase activity. This Salmonella arizonae (strain ATCC BAA-731 / CDC346-86 / RSK2980) protein is Catalase-peroxidase.